The sequence spans 626 residues: MESKTYYIFRNPDNPNYPVYHIINEKHVFKYTDFKIKEIIQVEPDYSKPDLKFTEYEDGIYATNYINEIAKISLLDVNNIDKLLFNFSYESFGPTYRLYSRFLSDNRLDLCDYLIEKNIKLTQFADYCIFNFMVNPSKESLMYIIDHNDFFQISWETIFKSIIPFTRDGEITDYLITLMDNINYKIDYDDIIKNVITNSYTLDIKNIEPIIEKTNINLYDVFKYACSRGKLHIIDYLLDKRIEYDFYELIKCDISTRTLNFFIEKGYYLDGIAIDIIINSEPHNIYKMVKFLIDQKYLTQDLITKQLLDTIIKTNINNLRLFINDFDVVDLVDLDMIIVMAIEFNSMELINWCMNNGININKYMSIIMKKCRPTIISGLIELGAQIPNDKSYYDPTIIENYCMGSDCISYLKTIIEKEFDTAENIIHNIIENRPHIEILKYLLTEVQTEHITIPKLTNVIIRNYYYDNDYCPEYYEDLIKSGIQFDIEQQTIIQIIEKKIVDVQGVIFSNCELSSNLKILFVTIMTDNIDILEFLLEINKYNQDYLQWALIFSSNNITILEYIINNTNVNPISFKQEMSTMAGHNNYYSIDYLRLNGFYTNNDVPTDSKLADFMNEIGIDIFNPNF.

5 ANK repeats span residues 217-246, 333-362, 421-451, 515-545, and 547-571; these read NLYD…EYDF, DLDM…NINK, TAEN…TEHI, SNLK…NQDY, and QWAL…NVNP.

This Acanthamoeba polyphaga mimivirus (APMV) protein is Putative ankyrin repeat protein L768.